Here is a 124-residue protein sequence, read N- to C-terminus: Ribonuclease P protein component 2 (124 aa).

It belongs to the eukaryotic/archaeal RNase P protein component 2 family. In terms of assembly, consists of a catalytic RNA component and at least 4-5 protein subunits.

It is found in the cytoplasm. It carries out the reaction Endonucleolytic cleavage of RNA, removing 5'-extranucleotides from tRNA precursor.. In terms of biological role, part of ribonuclease P, a protein complex that generates mature tRNA molecules by cleaving their 5'-ends. This Methanothermobacter thermautotrophicus (strain ATCC 29096 / DSM 1053 / JCM 10044 / NBRC 100330 / Delta H) (Methanobacterium thermoautotrophicum) protein is Ribonuclease P protein component 2.